A 342-amino-acid polypeptide reads, in one-letter code: Elongation factor Ts (342 aa).

The involved in Mg(2+) ion dislocation from EF-Tu stretch occupies residues 79–82 (TDFV).

This sequence belongs to the EF-Ts family.

It localises to the cytoplasm. In terms of biological role, associates with the EF-Tu.GDP complex and induces the exchange of GDP to GTP. It remains bound to the aminoacyl-tRNA.EF-Tu.GTP complex up to the GTP hydrolysis stage on the ribosome. The sequence is that of Elongation factor Ts from Lactococcus lactis subsp. cremoris (strain MG1363).